Here is a 326-residue protein sequence, read N- to C-terminus: Putative HTH-type transcriptional regulatory protein MmarC5_0898 (326 aa).

The region spanning 128–183 (LRETREKLKISVGELAEISRVSRKTIYKYEQNEANPSAEVAIKIEEYLDVPLIKGI) is the HTH cro/C1-type domain. The segment at residues 139 to 158 (VGELAEISRVSRKTIYKYEQ) is a DNA-binding region (H-T-H motif).

The sequence is that of Putative HTH-type transcriptional regulatory protein MmarC5_0898 from Methanococcus maripaludis (strain C5 / ATCC BAA-1333).